The sequence spans 204 residues: Outer-membrane lipoprotein LolB (204 aa).

The N-terminal stretch at M1–G16 is a signal peptide. C17 carries the N-palmitoyl cysteine lipid modification. C17 carries S-diacylglycerol cysteine lipidation.

Belongs to the LolB family. As to quaternary structure, monomer.

It localises to the cell outer membrane. Its function is as follows. Plays a critical role in the incorporation of lipoproteins in the outer membrane after they are released by the LolA protein. In Ectopseudomonas mendocina (strain ymp) (Pseudomonas mendocina), this protein is Outer-membrane lipoprotein LolB.